The sequence spans 285 residues: Acetylglutamate kinase (285 aa).

Residues 63–64 (GG), Arg85, and Asn178 each bind substrate.

This sequence belongs to the acetylglutamate kinase family. ArgB subfamily.

The protein localises to the cytoplasm. The enzyme catalyses N-acetyl-L-glutamate + ATP = N-acetyl-L-glutamyl 5-phosphate + ADP. The protein operates within amino-acid biosynthesis; L-arginine biosynthesis; N(2)-acetyl-L-ornithine from L-glutamate: step 2/4. Its function is as follows. Catalyzes the ATP-dependent phosphorylation of N-acetyl-L-glutamate. The polypeptide is Acetylglutamate kinase (Synechococcus sp. (strain CC9311)).